Reading from the N-terminus, the 202-residue chain is Na(+)-translocating NADH-quinone reductase subunit E (202 aa).

A run of 6 helical transmembrane segments spans residues 11–31 (SVFV…FLAI), 35–55 (IDAA…TVPV), 81–101 (FLGL…MEMV), 114–134 (GVFL…LLMV), 144–164 (VVFG…LAGI), and 182–202 (ITFI…GIAL).

Belongs to the NqrDE/RnfAE family. Composed of six subunits; NqrA, NqrB, NqrC, NqrD, NqrE and NqrF.

Its subcellular location is the cell inner membrane. The enzyme catalyses a ubiquinone + n Na(+)(in) + NADH + H(+) = a ubiquinol + n Na(+)(out) + NAD(+). NQR complex catalyzes the reduction of ubiquinone-1 to ubiquinol by two successive reactions, coupled with the transport of Na(+) ions from the cytoplasm to the periplasm. NqrA to NqrE are probably involved in the second step, the conversion of ubisemiquinone to ubiquinol. The protein is Na(+)-translocating NADH-quinone reductase subunit E of Saccharophagus degradans (strain 2-40 / ATCC 43961 / DSM 17024).